A 1092-amino-acid polypeptide reads, in one-letter code: Neural cell adhesion molecule 1-B (1092 aa).

Residues 1-19 form the signal peptide; that stretch reads MLHIKDLIWTLYFIGAAVA. 5 consecutive Ig-like C2-type domains span residues 20-108, 113-202, 208-295, 303-397, and 400-489; these read LEVN…GTVN, QKLT…KDIQ, PPLI…EAIV, PKMT…FEVQ, and PKIR…FILV. At 20 to 705 the chain is on the extracellular side; it reads LEVNIVPDQG…ATSASTGLGT (686 aa). 2 cysteine pairs are disulfide-bonded: Cys-41–Cys-93 and Cys-136–Cys-186. Asn-82 is a glycosylation site (N-linked (GlcNAc...) asparagine). Residues 149 to 153 and 158 to 162 each bind heparin; these read RHKGK and KKDVR. N-linked (GlcNAc...) asparagine glycosylation occurs at Asn-219. Cysteines 232 and 282 form a disulfide. 5 N-linked (GlcNAc...) asparagine glycosylation sites follow: Asn-310, Asn-341, Asn-417, Asn-443, and Asn-472. Cys-323 and Cys-379 are disulfide-bonded. Cys-420 and Cys-473 are disulfide-bonded. Fibronectin type-III domains are found at residues 493 to 592 and 595 to 691; these read TPSS…TQPV and EPSA…TAKP. Residues 706–723 form a helical membrane-spanning segment; sequence GAIVGILIVTFVLLLVVV. Over 724-1092 the chain is Cytoplasmic; that stretch reads DVTCFFLNKC…TQRNVNESKA (369 aa). Over residues 754–784 the composition is skewed to basic and acidic residues; the sequence is KDIEEGKAAFSKDESKEPIVEVRTEEERTPN. 2 disordered regions span residues 754-1005 and 1024-1092; these read KDIE…GGTF and TPAA…ESKA. Composition is skewed to low complexity over residues 820–832 and 839–851; these read TTVTTNSDTITET and SPTSETTTLTSST. Residues 860–871 show a composition bias toward polar residues; the sequence is DSNTVQSVQATP. Residues 917-929 show a composition bias toward low complexity; the sequence is PSAATSAAEPPTA. The span at 968–978 shows a compositional bias: polar residues; the sequence is AQPSTVKSPTE. The segment covering 1050 to 1068 has biased composition (basic and acidic residues); it reads AKTEKTQVEENSKPEETDV. Positions 1080–1092 are enriched in polar residues; that stretch reads NEATQRNVNESKA.

Post-translationally, polysialylated by ST8SIA2 and ST8SIA4. Polysialylation modulates cell interactions by confering both attractive and repulsive properties that are highly regulated by ST8SIA2 and ST8SIA4. Polysialylation is formed on a-2,3-linked sialic acid of core glycans.

It localises to the cell membrane. In terms of biological role, this protein is a cell adhesion molecule involved in neuron-neuron adhesion, neurite fasciculation, outgrowth of neurites, etc. In Xenopus laevis (African clawed frog), this protein is Neural cell adhesion molecule 1-B.